We begin with the raw amino-acid sequence, 208 residues long: Putative 3-methyladenine DNA glycosylase (208 aa).

This sequence belongs to the DNA glycosylase MPG family.

This is Putative 3-methyladenine DNA glycosylase from Lactobacillus delbrueckii subsp. bulgaricus (strain ATCC BAA-365 / Lb-18).